The following is a 221-amino-acid chain: Ras-related protein Rab-27A (221 aa).

Ser-2 carries the N-acetylserine modification. Ser-2 carries the phosphoserine modification. 16–24 lines the GTP pocket; that stretch reads GDSGVGKTS. An Effector region motif is present at residues 38–46; it reads FITTVGIDF. Residues 74-78, 133-136, and 163-165 each bind GTP; these read DTAGQ, NKSD, and SAA. Cys-123 and Cys-188 are joined by a disulfide. Residues Cys-219 and Cys-221 are each lipidated (S-geranylgeranyl cysteine). The residue at position 221 (Cys-221) is a Cysteine methyl ester.

It belongs to the small GTPase superfamily. Rab family. As to quaternary structure, binds SYTL1, SLAC2B, MYRIP, SYTL3, SYTL4 and SYTL5. Interacts with RPH3A and RPH3A. Binds MLPH and SYTL2. Interacts with UNC13D. Does not interact with the BLOC-3 complex (heterodimer of HPS1 and HPS4). Interacts (GDP-bound form preferentially) with DENND10.

The protein localises to the membrane. It localises to the melanosome. Its subcellular location is the late endosome. The protein resides in the lysosome. The catalysed reaction is GTP + H2O = GDP + phosphate + H(+). Regulated by guanine nucleotide exchange factors (GEFs) which promote the exchange of bound GDP for free GTP, GTPase activating proteins (GAPs) which increase the GTP hydrolysis activity, and GDP dissociation inhibitors which inhibit the dissociation of the nucleotide from the GTPase. Activated by GEFs such as DENND10. Small GTPase which cycles between active GTP-bound and inactive GDP-bound states. In its active state, binds to a variety of effector proteins to regulate homeostasis of late endocytic pathway, including endosomal positioning, maturation and secretion. Plays a role in cytotoxic granule exocytosis in lymphocytes. Required for both granule maturation and granule docking and priming at the immunologic synapse. In Canis lupus familiaris (Dog), this protein is Ras-related protein Rab-27A (RAB27A).